A 120-amino-acid polypeptide reads, in one-letter code: 2-amino-4-hydroxy-6-hydroxymethyldihydropteridine pyrophosphokinase (120 aa).

It belongs to the HPPK family.

It catalyses the reaction 6-hydroxymethyl-7,8-dihydropterin + ATP = (7,8-dihydropterin-6-yl)methyl diphosphate + AMP + H(+). The protein operates within cofactor biosynthesis; tetrahydrofolate biosynthesis; 2-amino-4-hydroxy-6-hydroxymethyl-7,8-dihydropteridine diphosphate from 7,8-dihydroneopterin triphosphate: step 4/4. Functionally, catalyzes the transfer of pyrophosphate from adenosine triphosphate (ATP) to 6-hydroxymethyl-7,8-dihydropterin, an enzymatic step in folate biosynthesis pathway. In Pseudomonas putida (Arthrobacter siderocapsulatus), this protein is 2-amino-4-hydroxy-6-hydroxymethyldihydropteridine pyrophosphokinase (folK).